We begin with the raw amino-acid sequence, 198 residues long: ATP-dependent Clp protease proteolytic subunit (198 aa).

The active-site Nucleophile is Ser-98. Residue His-123 is part of the active site.

This sequence belongs to the peptidase S14 family. As to quaternary structure, fourteen ClpP subunits assemble into 2 heptameric rings which stack back to back to give a disk-like structure with a central cavity, resembling the structure of eukaryotic proteasomes.

The protein resides in the cytoplasm. The catalysed reaction is Hydrolysis of proteins to small peptides in the presence of ATP and magnesium. alpha-casein is the usual test substrate. In the absence of ATP, only oligopeptides shorter than five residues are hydrolyzed (such as succinyl-Leu-Tyr-|-NHMec, and Leu-Tyr-Leu-|-Tyr-Trp, in which cleavage of the -Tyr-|-Leu- and -Tyr-|-Trp bonds also occurs).. In terms of biological role, cleaves peptides in various proteins in a process that requires ATP hydrolysis. Has a chymotrypsin-like activity. Plays a major role in the degradation of misfolded proteins. This Halothermothrix orenii (strain H 168 / OCM 544 / DSM 9562) protein is ATP-dependent Clp protease proteolytic subunit.